Consider the following 159-residue polypeptide: SsrA-binding protein (159 aa).

This sequence belongs to the SmpB family.

It is found in the cytoplasm. Functionally, required for rescue of stalled ribosomes mediated by trans-translation. Binds to transfer-messenger RNA (tmRNA), required for stable association of tmRNA with ribosomes. tmRNA and SmpB together mimic tRNA shape, replacing the anticodon stem-loop with SmpB. tmRNA is encoded by the ssrA gene; the 2 termini fold to resemble tRNA(Ala) and it encodes a 'tag peptide', a short internal open reading frame. During trans-translation Ala-aminoacylated tmRNA acts like a tRNA, entering the A-site of stalled ribosomes, displacing the stalled mRNA. The ribosome then switches to translate the ORF on the tmRNA; the nascent peptide is terminated with the 'tag peptide' encoded by the tmRNA and targeted for degradation. The ribosome is freed to recommence translation, which seems to be the essential function of trans-translation. The polypeptide is SsrA-binding protein (Idiomarina loihiensis (strain ATCC BAA-735 / DSM 15497 / L2-TR)).